The sequence spans 279 residues: Apolipoprotein L domain-containing protein 1 (279 aa).

A run of 3 helical transmembrane segments spans residues 83-105 (SLVA…IVGL), 122-142 (GLGV…SLIF), and 192-212 (IALY…FLIP). Residues 226–253 (LKAKIQKLAESLESCTGALDELSEQLES) are a coiled coil.

The protein belongs to the apolipoprotein L family. Expressed in neonatal dermal microvascular endothelial cells.

The protein localises to the cell membrane. The protein resides in the cell junction. It localises to the cytoplasmic vesicle. It is found in the secretory vesicle. Its function is as follows. Is a modulator of endothelial barrier permeability, required for proper organization of endothelial cell-cell junctions and cytoskeleton. It also plays a role in the modulation of secretory autophagy. May affect blood-brain barrier permeability. The polypeptide is Apolipoprotein L domain-containing protein 1 (APOLD1) (Homo sapiens (Human)).